The following is an 85-amino-acid chain: Putative membrane protein insertion efficiency factor (85 aa).

It belongs to the UPF0161 family.

The protein localises to the cell inner membrane. Could be involved in insertion of integral membrane proteins into the membrane. This chain is Putative membrane protein insertion efficiency factor, found in Fervidobacterium nodosum (strain ATCC 35602 / DSM 5306 / Rt17-B1).